A 345-amino-acid polypeptide reads, in one-letter code: Selenide, water dikinase (345 aa).

Residue Cys15 is part of the active site. ATP contacts are provided by residues Lys18 and 46-48 (SKD). Asp49 is a Mg(2+) binding site. ATP is bound by residues Asp66, Asp89, and 137 to 139 (GHS). Asp89 serves as a coordination point for Mg(2+). Mg(2+) is bound at residue Asp225.

It belongs to the selenophosphate synthase 1 family. Class I subfamily. Homodimer. It depends on Mg(2+) as a cofactor.

The enzyme catalyses hydrogenselenide + ATP + H2O = selenophosphate + AMP + phosphate + 2 H(+). Synthesizes selenophosphate from selenide and ATP. The sequence is that of Selenide, water dikinase from Aeromonas salmonicida (strain A449).